Here is a 102-residue protein sequence, read N- to C-terminus: Large ribosomal subunit protein bL21 (102 aa).

The protein belongs to the bacterial ribosomal protein bL21 family. In terms of assembly, part of the 50S ribosomal subunit. Contacts protein L20.

This protein binds to 23S rRNA in the presence of protein L20. This chain is Large ribosomal subunit protein bL21, found in Macrococcus caseolyticus (strain JCSC5402) (Macrococcoides caseolyticum).